We begin with the raw amino-acid sequence, 425 residues long: Glutamate-1-semialdehyde 2,1-aminomutase (425 aa).

Lysine 265 bears the N6-(pyridoxal phosphate)lysine mark.

This sequence belongs to the class-III pyridoxal-phosphate-dependent aminotransferase family. HemL subfamily. As to quaternary structure, homodimer. Pyridoxal 5'-phosphate is required as a cofactor.

Its subcellular location is the cytoplasm. The catalysed reaction is (S)-4-amino-5-oxopentanoate = 5-aminolevulinate. It participates in porphyrin-containing compound metabolism; protoporphyrin-IX biosynthesis; 5-aminolevulinate from L-glutamyl-tRNA(Glu): step 2/2. This is Glutamate-1-semialdehyde 2,1-aminomutase from Psychromonas ingrahamii (strain DSM 17664 / CCUG 51855 / 37).